The chain runs to 300 residues: Actin-related protein 2/3 complex subunit 2-A (300 aa).

This sequence belongs to the ARPC2 family. In terms of assembly, component of the Arp2/3 complex composed of actr2/arp2, actr3/arp3, arpc1 (arpc1a or arpc1b), arpc2, arpc3, arpc4 and arpc5.

The protein localises to the cytoplasm. It localises to the cytoskeleton. The protein resides in the cell projection. It is found in the nucleus. In terms of biological role, actin-binding component of the Arp2/3 complex, a multiprotein complex that mediates actin polymerization upon stimulation by nucleation-promoting factor (NPF). The Arp2/3 complex mediates the formation of branched actin networks in the cytoplasm, providing the force for cell motility. In addition to its role in the cytoplasmic cytoskeleton, the Arp2/3 complex also promotes actin polymerization in the nucleus, thereby regulating gene transcription and repair of damaged DNA. The Arp2/3 complex promotes homologous recombination (HR) repair in response to DNA damage by promoting nuclear actin polymerization, leading to drive motility of double-strand breaks (DSBs). The sequence is that of Actin-related protein 2/3 complex subunit 2-A (arpc2-a) from Xenopus laevis (African clawed frog).